A 226-amino-acid chain; its full sequence is Lysoplasmalogenase TMEM86B (226 aa).

The Cytoplasmic portion of the chain corresponds to 1-23 (MDAGKAGQTLKTHCSAQRPDVCR). Residues 24–40 (WLSPFILSCCVYFCLWI) traverse the membrane as a helical segment. Residues 41 to 46 (PEDQLS) are Extracellular-facing. The chain crosses the membrane as a helical span at residues 47–67 (WFAALVKCLPVLCLAGFLWVM). The Cytoplasmic portion of the chain corresponds to 68–75 (SPSGGYTQ). Residues 76–93 (LLQGALVCSAVGDACLIW) traverse the membrane as a helical segment. The Extracellular portion of the chain corresponds to 94–100 (PAAFVPG). Residues 101 to 117 (MAAFATAHLLYVWAFGF) traverse the membrane as a helical segment. At 118–123 (SPLQPG) the chain is on the cytoplasmic side. Residues 124 to 140 (LLLLIILAPGPYLSLVL) form a helical membrane-spanning segment. The Extracellular segment spans residues 141 to 146 (QHLEPD). The helical transmembrane segment at 147–163 (MVLPVAAYGLILMAMLW) threads the bilayer. Residues 164 to 171 (RGLAQGGS) lie on the Cytoplasmic side of the membrane. The chain crosses the membrane as a helical span at residues 172 to 188 (AGWGALLFTLSDGVLAW). Residues 189–199 (DTFAQPLPHAH) lie on the Extracellular side of the membrane. Residues 200-218 (LVIMTTYYAAQLLITLSAL) form a helical membrane-spanning segment. Residues 219–226 (RSPVPKTD) are Cytoplasmic-facing.

Belongs to the TMEM86 family. As to quaternary structure, homodimer.

It localises to the endoplasmic reticulum membrane. Its subcellular location is the cytoplasm. The enzyme catalyses a 1-O-(1Z-alkenyl)-sn-glycero-3-phosphocholine + H2O = a 2,3-saturated aldehyde + sn-glycerol 3-phosphocholine. It catalyses the reaction a 1-O-(1Z-alkenyl)-sn-glycero-3-phosphoethanolamine + H2O = a 2,3-saturated aldehyde + sn-glycero-3-phosphoethanolamine. Its activity is regulated as follows. Competitively inhibited by lysophosphatidic acid. Its function is as follows. Catalyzes the hydrolysis of the vinyl ether bond of choline or ethanolamine lysoplasmalogens, forming fatty aldehyde and glycerophosphocholine or glycerophosphoethanolamine, respectively and is specific for the sn-2-deacylated (lyso) form of plasmalogen. The polypeptide is Lysoplasmalogenase TMEM86B (TMEM86B) (Homo sapiens (Human)).